A 388-amino-acid chain; its full sequence is Dual-specificity RNA methyltransferase RlmN (388 aa).

The active-site Proton acceptor is the E109. The 240-residue stretch at 115–354 (EDDRATLCVS…TIVRKTRGDD (240 aa)) folds into the Radical SAM core domain. Residues C122 and C359 are joined by a disulfide bond. The [4Fe-4S] cluster site is built by C129, C133, and C136. S-adenosyl-L-methionine-binding positions include 183-184 (GE), S215, 237-239 (SLH), and N316. Residue C359 is the S-methylcysteine intermediate of the active site.

This sequence belongs to the radical SAM superfamily. RlmN family. The cofactor is [4Fe-4S] cluster.

It localises to the cytoplasm. The enzyme catalyses adenosine(2503) in 23S rRNA + 2 reduced [2Fe-2S]-[ferredoxin] + 2 S-adenosyl-L-methionine = 2-methyladenosine(2503) in 23S rRNA + 5'-deoxyadenosine + L-methionine + 2 oxidized [2Fe-2S]-[ferredoxin] + S-adenosyl-L-homocysteine. The catalysed reaction is adenosine(37) in tRNA + 2 reduced [2Fe-2S]-[ferredoxin] + 2 S-adenosyl-L-methionine = 2-methyladenosine(37) in tRNA + 5'-deoxyadenosine + L-methionine + 2 oxidized [2Fe-2S]-[ferredoxin] + S-adenosyl-L-homocysteine. Its function is as follows. Specifically methylates position 2 of adenine 2503 in 23S rRNA and position 2 of adenine 37 in tRNAs. m2A2503 modification seems to play a crucial role in the proofreading step occurring at the peptidyl transferase center and thus would serve to optimize ribosomal fidelity. The polypeptide is Dual-specificity RNA methyltransferase RlmN (Salmonella typhi).